Reading from the N-terminus, the 105-residue chain is Large ribosomal subunit protein eL36 (105 aa).

Residues 86 to 105 (QAGKKKRDDIANINRKASAK) form a disordered region.

The protein belongs to the eukaryotic ribosomal protein eL36 family.

This is Large ribosomal subunit protein eL36 (rpl36) from Dictyostelium discoideum (Social amoeba).